The following is a 106-amino-acid chain: UPF0060 membrane protein AZC_0909 (106 aa).

4 helical membrane-spanning segments follow: residues 4–24 (PLFA…WHVV), 27–47 (GGSP…AALL), 58–78 (AFAA…WAAE), and 84–104 (RFDA…LFAP).

The protein belongs to the UPF0060 family.

The protein resides in the cell inner membrane. This is UPF0060 membrane protein AZC_0909 from Azorhizobium caulinodans (strain ATCC 43989 / DSM 5975 / JCM 20966 / LMG 6465 / NBRC 14845 / NCIMB 13405 / ORS 571).